A 153-amino-acid chain; its full sequence is Nucleoside diphosphate kinase (153 aa).

Residues Lys13, Phe61, Arg89, Thr95, Arg106, and Asn116 each contribute to the ATP site. Catalysis depends on His119, which acts as the Pros-phosphohistidine intermediate.

It belongs to the NDK family. Mg(2+) serves as cofactor.

The protein localises to the cytoplasm. It is found in the cell membrane. It carries out the reaction a 2'-deoxyribonucleoside 5'-diphosphate + ATP = a 2'-deoxyribonucleoside 5'-triphosphate + ADP. The catalysed reaction is a ribonucleoside 5'-diphosphate + ATP = a ribonucleoside 5'-triphosphate + ADP. Functionally, major role in the synthesis of nucleoside triphosphates other than ATP. The ATP gamma phosphate is transferred to the NDP beta phosphate via a ping-pong mechanism, using a phosphorylated active-site intermediate. This is Nucleoside diphosphate kinase from Gallus gallus (Chicken).